A 552-amino-acid chain; its full sequence is 2,3-bisphosphoglycerate-independent phosphoglycerate mutase (552 aa).

Residues 1–25 (MTNTQQQSESIDDNQAQLSKQQNSD) show a composition bias toward polar residues. The disordered stretch occupies residues 1-30 (MTNTQQQSESIDDNQAQLSKQQNSDNNKKV). The Mn(2+) site is built by D38 and S88. Residue S88 is the Phosphoserine intermediate of the active site. Substrate is bound by residues H149, 179–180 (RD), R217, R223, 293–296 (RADR), and K373. Mn(2+) contacts are provided by D440, H444, D481, H482, and H500.

It belongs to the BPG-independent phosphoglycerate mutase family. Monomer. Mn(2+) is required as a cofactor.

The enzyme catalyses (2R)-2-phosphoglycerate = (2R)-3-phosphoglycerate. It participates in carbohydrate degradation; glycolysis; pyruvate from D-glyceraldehyde 3-phosphate: step 3/5. In terms of biological role, catalyzes the interconversion of 2-phosphoglycerate and 3-phosphoglycerate. The chain is 2,3-bisphosphoglycerate-independent phosphoglycerate mutase from Psychrobacter arcticus (strain DSM 17307 / VKM B-2377 / 273-4).